The primary structure comprises 402 residues: APO protein 3, mitochondrial (402 aa).

A mitochondrion-targeting transit peptide spans Met1 to Val13. Positions Asn37–Tyr59 are disordered. Over residues Lys48 to Pro58 the composition is skewed to basic and acidic residues. 2 consecutive APO domains span residues Arg127–Lys213 and Thr294–Asp380.

Belongs to the APO family.

It is found in the mitochondrion. Functionally, may be involved in the stable assembly of several 4Fe-4S cluster-containing complexes of mitochondria. This chain is APO protein 3, mitochondrial (APO3), found in Arabidopsis thaliana (Mouse-ear cress).